A 310-amino-acid chain; its full sequence is AT-hook motif nuclear-localized protein 15 (310 aa).

Disordered regions lie at residues 15–112 (VESP…KESP) and 239–310 (EEEQ…PPSY). 2 stretches are compositionally biased toward polar residues: residues 31 to 41 (SNNNNPPTMTR) and 51 to 67 (TTNNSGSPNTQTQSQEE). The a.T hook DNA-binding region spans 88 to 100 (RRPRGRPPGSKNK). Positions 94–104 (PPGSKNKPKSP) are enriched in low complexity. The PPC domain maps to 112–251 (PNSLQSHVLE…QQQEQPLQLE (140 aa)). Residues 301–310 (GPPPRAPPSY) are compositionally biased toward pro residues.

The protein localises to the nucleus. Functionally, transcription factor that specifically binds AT-rich DNA sequences related to the nuclear matrix attachment regions (MARs). Binds the DNA sequence GNFEI (GA-negative feedback element I) in the GA3OX1 promoter. Negatively regulates plant innate immunity (PTI) to pathogens through the down-regulation of the PAMP-triggered FRK1 expression. This is AT-hook motif nuclear-localized protein 15 from Arabidopsis thaliana (Mouse-ear cress).